The chain runs to 1491 residues: CLIP-associating protein (1491 aa).

HEAT repeat units follow at residues 44 to 82 (CTDM…RLGS), 85 to 123 (NAYT…HRVL), 163 to 201 (QLSV…HVGD), and 402 to 440 (DAFC…YTHA). 2 disordered regions span residues 537–586 (RERE…AVDT) and 600–739 (LYSR…NNPV). The segment covering 542-551 (GGGGGTGTGT) has biased composition (gly residues). Over residues 569-580 (GTLQKPTPSMRS) the composition is skewed to polar residues. A phosphoserine mark is found at S582, S626, and S634. Residues 632–646 (LNSNSGGTPATTPGS) show a composition bias toward polar residues. T648 bears the Phosphothreonine mark. 2 stretches are compositionally biased toward polar residues: residues 657–671 (VSQS…SPST) and 699–712 (PRST…SPTR). S806, S817, S820, S822, and S824 each carry phosphoserine. 2 HEAT repeats span residues 874 to 912 (QQQL…VHAN) and 955 to 993 (QLQL…TYCK). Disordered regions lie at residues 1065–1127 (HMRR…SVEQ) and 1167–1205 (GHLQ…ESAT). Low complexity-rich tracts occupy residues 1070–1097 (SQSC…QSPS), 1111–1124 (LSIS…RQSS), and 1181–1200 (ASLS…QSNT). Phosphoserine occurs at positions 1120, 1123, and 1124. HEAT repeat units lie at residues 1289-1327 (NKHF…SNKM) and 1408-1446 (DAHL…VLGE).

This sequence belongs to the CLASP family. Interacts with CLIP-190 and microtubules. In terms of tissue distribution, expressed in testis and ovary.

The protein resides in the cytoplasm. It is found in the cytoskeleton. The protein localises to the nucleus. It localises to the microtubule organizing center. Its subcellular location is the centrosome. The protein resides in the spindle. It is found in the cell projection. The protein localises to the growth cone. It localises to the cleavage furrow. Microtubule plus-end tracking protein that promotes the stabilization of dynamic microtubules. Required for several aspects of mitotic spindle formation including the formation of the overlapping central spindle microtubules and kinetochore attachment. Required for the incorporation of tubulin subunits at the plus ends of kinetochore microtubules during poleward microtubule flux. Acts antagonistically to Klp10A and Klp67A to maintain metaphase spindle length. Also required for guidance of CNS axons downstream of Abl. May function to identify a subset of microtubules that probe the peripheral growth cone domain, where guidance signals exert their influence on cytoskeletal organization. Also required during oogenesis for the organization of the polarized microtubule network inside the 16-cell cyst that ensures oocyte differentiation. This Drosophila melanogaster (Fruit fly) protein is CLIP-associating protein (chb).